We begin with the raw amino-acid sequence, 461 residues long: Decaprenylphosphoryl-beta-D-ribose oxidase (461 aa).

An FAD-binding PCMH-type domain is found at 19 to 194 (TAPSVANVLR…MRATIEMTPT (176 aa)). FAD is bound by residues 53-63 (ARGLGRSYGDN), glycine 117, 122-125 (TVGG), 129-132 (CDIH), isoleucine 184, and tyrosine 415.

It belongs to the DprE1 family. As to quaternary structure, monomer. Although forming apparent dimer in crystals, DprE1 does not dimerize appreciably in solution. Interacts with DprE2 to form an epimerase complex.

The protein resides in the periplasm. It catalyses the reaction trans,octa-cis-decaprenylphospho-beta-D-ribofuranose + FAD + H(+) = trans,octa-cis-decaprenylphospho-beta-D-erythro-pentofuranosid-2-ulose + FADH2. Its pathway is cell wall biogenesis; cell wall polysaccharide biosynthesis. Its activity is regulated as follows. Is inhibited by 8-nitro-benzothiazinones (BTZs) such as BTZ043 and PBTZ169; BTZs are a new class of antimycobacterial agents that kill M.tuberculosis in vitro, ex vivo, and in mouse models of tuberculosis. Is also inhibited by dinitrobenzamide derivatives (DNBs), which thus block formation of both cell-wall lipoarabinomannan and arabinogalactan via inhibition of decaprenyl-phospho-arabinose (DPA) synthesis; DNBs show high activity against intracellular growth of M.tuberculosis inside macrophages, including extensively drug resistant (XDR) strains. BTZs and DNBs are suicide inhibitors that act via covalent modification of DprE1; the essential nitro group of these compounds is reduced by DprE1 to a nitroso group, which then specifically reacts with Cys-387 of DprE1 to form an irreversible semimercaptal adduct. Many other compounds with diverse scaffolds were found to act as either covalent (e.g. nitroquinoxalines, nitroimidazoles) or non-covalent (e.g. the benzothiazole derivative TCA1, the 2-carboxyquinoxaline Ty38C, 8-pyrrole-benzothiazinones, 1,4-azaindoles, pyrazolopyridones, 4-aminoquinolone piperidine amides) DprE1 inhibitors. Functionally, component of the DprE1-DprE2 complex that catalyzes the 2-step epimerization of decaprenyl-phospho-ribose (DPR) to decaprenyl-phospho-arabinose (DPA), a key precursor that serves as the arabinose donor required for the synthesis of cell-wall arabinans. DprE1 catalyzes the first step of epimerization, namely FAD-dependent oxidation of the C2' hydroxyl of DPR to yield the keto intermediate decaprenyl-phospho-2'-keto-D-arabinose (DPX). The intermediate DPX is then transferred to DprE2 subunit of the epimerase complex, most probably through a 'substrate channel' at the interface of DprE1-DprE2 complex. Can also use farnesyl-phosphoryl-beta-D-ribofuranose (FPR) as substrate in vitro. DprE1 is a highly vulnerable and fully validated tuberculosis drug target. In Mycobacterium tuberculosis (strain CDC 1551 / Oshkosh), this protein is Decaprenylphosphoryl-beta-D-ribose oxidase.